The primary structure comprises 459 residues: Eukaryotic translation initiation factor 3 subunit M (459 aa).

One can recognise a PCI domain in the interval 207-384; that stretch reads LDWAQTHVVD…SEFLVHRATY (178 aa). Residues 431 to 459 are disordered; sequence AAAEGEKGDKNNKGPSERRRAPQEIAAAE. Residues 434-452 show a composition bias toward basic and acidic residues; the sequence is EGEKGDKNNKGPSERRRAP.

It belongs to the eIF-3 subunit M family. Component of the eukaryotic translation initiation factor 3 (eIF-3) complex.

Its subcellular location is the cytoplasm. In terms of biological role, component of the eukaryotic translation initiation factor 3 (eIF-3) complex, which is involved in protein synthesis of a specialized repertoire of mRNAs and, together with other initiation factors, stimulates binding of mRNA and methionyl-tRNAi to the 40S ribosome. The eIF-3 complex specifically targets and initiates translation of a subset of mRNAs involved in cell proliferation. The polypeptide is Eukaryotic translation initiation factor 3 subunit M (Emericella nidulans (strain FGSC A4 / ATCC 38163 / CBS 112.46 / NRRL 194 / M139) (Aspergillus nidulans)).